Here is a 502-residue protein sequence, read N- to C-terminus: Aspartyl/glutamyl-tRNA(Asn/Gln) amidotransferase subunit B (502 aa).

This sequence belongs to the GatB/GatE family. GatB subfamily. As to quaternary structure, heterotrimer of A, B and C subunits.

It catalyses the reaction L-glutamyl-tRNA(Gln) + L-glutamine + ATP + H2O = L-glutaminyl-tRNA(Gln) + L-glutamate + ADP + phosphate + H(+). The enzyme catalyses L-aspartyl-tRNA(Asn) + L-glutamine + ATP + H2O = L-asparaginyl-tRNA(Asn) + L-glutamate + ADP + phosphate + 2 H(+). Its function is as follows. Allows the formation of correctly charged Asn-tRNA(Asn) or Gln-tRNA(Gln) through the transamidation of misacylated Asp-tRNA(Asn) or Glu-tRNA(Gln) in organisms which lack either or both of asparaginyl-tRNA or glutaminyl-tRNA synthetases. The reaction takes place in the presence of glutamine and ATP through an activated phospho-Asp-tRNA(Asn) or phospho-Glu-tRNA(Gln). In Brucella suis (strain ATCC 23445 / NCTC 10510), this protein is Aspartyl/glutamyl-tRNA(Asn/Gln) amidotransferase subunit B.